Consider the following 1063-residue polypeptide: Structural polyprotein (1063 aa).

Positions 1–131 (MASTTPITME…LGPPTNPFQA (131 aa)) are disordered. The human C1QBP/SF2P32-binding stretch occupies residues 30–69 (GASQSRRPRPPRQRDSSTSGDDSGRDSGGPRRRRGNRGRG). Position 46 is a phosphoserine; by host (Ser46). Basic residues predominate over residues 59-69 (PRRRRGNRGRG). The segment covering 70-87 (QRRDWSRAPPPPEERQET) has biased composition (basic and acidic residues). Pro residues predominate over residues 93-107 (APKPSRAPPQQPQPP). Cys153 and Cys197 are oxidised to a cystine. The functions as E2 signal peptide stretch occupies residues 279–300 (GAPQAFLAGLLLATVAVGTARA). The Extracellular segment spans residues 301–534 (GLQPRADMAA…LWLATANALS (234 aa)). N-linked (GlcNAc...) asparagine; by host glycans are attached at residues Asn353, Asn371, Asn410, and Asn429. The chain crosses the membrane as a helical span at residues 535-555 (LDHALAAFVLLVPWVLIFMVC). At 556–582 (RRACRRRGAAAALTAVVLQGYNPPAYG) the chain is on the cytoplasmic side. Residues 563 to 582 (GAAAALTAVVLQGYNPPAYG) form a functions as E1 signal peptide region. Topologically, residues 583 to 1028 (EEAFTYLCTA…QTWAEWAAAH (446 aa)) are extracellular. 8 disulfide bridges follow: Cys590-Cys595, Cys619-Cys824, Cys641-Cys653, Cys699-Cys712, Cys758-Cys767, Cys807-Cys817, Cys931-Cys934, and Cys950-Cys983. Asn658 carries N-linked (GlcNAc...) asparagine; by host glycosylation. Residues Asn670 and Ala671 each coordinate Ca(2+). Asp718 and Thr719 together coordinate Ca(2+). Residues Asn759 and Asn791 are each glycosylated (N-linked (GlcNAc...) asparagine; by host). O-linked (GalNAc...) threonine; by host glycans are attached at residues Thr1011 and Thr1012. Residues 1029-1049 (WWQLTLGAICALPLAGLLACC) traverse the membrane as a helical segment. Topologically, residues 1050-1063 (AKCLYYLRGAIAPR) are extracellular.

As to quaternary structure, homodimer; further assembles into homooligomer. Interacts with human C1QBP. Interacts (via N-terminus) with protease/methyltransferase p150. In terms of assembly, heterodimer with spike glycoprotein E2. Heterodimer with spike glycoprotein E1. Structural polyprotein: Specific enzymatic cleavages in vivo yield mature proteins. Two signal peptidase-mediated cleavages within the polyprotein produce the structural proteins capsid, E2, and E1. The E2 signal peptide remains attached to the C-terminus of the capsid protein after cleavage by the signal peptidase. Another signal peptide at E2 C-terminus directs E1 to the ER, with a similar mechanism. Post-translationally, contains three N-linked oligosaccharides. In terms of processing, capsid is phosphorylated on Ser-46 by host. This phosphorylation negatively regulates capsid protein RNA-binding activity. Dephosphorylated by human PP1A.

Its subcellular location is the virion. The protein localises to the host cytoplasm. It is found in the host mitochondrion. The protein resides in the virion membrane. It localises to the host Golgi apparatus membrane. Capsid protein interacts with genomic RNA and assembles into icosahedric core particles 65-70 nm in diameter. The resulting nucleocapsid eventually associates with the cytoplasmic domain of E2 at the cell membrane, leading to budding and formation of mature virions from host Golgi membranes. Phosphorylation negatively regulates RNA-binding activity, possibly delaying virion assembly during the viral replication phase. Capsid protein dimerizes and becomes disulfide-linked in the virion. Modulates genomic RNA replication. Modulates subgenomic RNA synthesis by interacting with human C1QBP/SF2P32. Induces both perinuclear clustering of mitochondria and the formation of electron-dense intermitochondrial plaques, both hallmarks of rubella virus infected cells. Induces apoptosis when expressed in transfected cells. Its function is as follows. Responsible for viral attachment to target host cell, by binding to the cell receptor. Its transport to the plasma membrane depends on interaction with E1 protein. The surface glycoproteins display an irregular helical organization and a pseudo-tetrameric inner nucleocapsid arrangement. In terms of biological role, class II viral fusion protein. Fusion activity is inactive as long as E1 is bound to E2 in mature virion. After virus attachment to target cell and clathrin-mediated endocytosis, acidification of the endosome would induce dissociation of E1/E2 heterodimer and concomitant trimerization of the E1 subunits. This E1 homotrimer is fusion active, and promotes release of viral nucleocapsid in cytoplasm after endosome and viral membrane fusion. The cytoplasmic tail of spike glycoprotein E1 modulates virus release. The surface glycoproteins display an irregular helical organization and a pseudo-tetrameric inner nucleocapsid arrangement. The protein is Structural polyprotein of Rubella virus (strain Therien) (RUBV).